Consider the following 335-residue polypeptide: Phosphate acyltransferase (335 aa).

It belongs to the PlsX family. In terms of assembly, homodimer. Probably interacts with PlsY.

The protein localises to the cytoplasm. It catalyses the reaction a fatty acyl-[ACP] + phosphate = an acyl phosphate + holo-[ACP]. Its pathway is lipid metabolism; phospholipid metabolism. Its function is as follows. Catalyzes the reversible formation of acyl-phosphate (acyl-PO(4)) from acyl-[acyl-carrier-protein] (acyl-ACP). This enzyme utilizes acyl-ACP as fatty acyl donor, but not acyl-CoA. In Heliobacterium modesticaldum (strain ATCC 51547 / Ice1), this protein is Phosphate acyltransferase.